Reading from the N-terminus, the 511-residue chain is Alpha-amylase 2B (511 aa).

A signal peptide spans 1–15 (MKFFLLLFTIGFCWA). Residue Gln16 is modified to Pyrrolidone carboxylic acid. Intrachain disulfides connect Cys43–Cys101, Cys85–Cys130, and Cys156–Cys175. Ca(2+)-binding residues include Asn115, Arg173, and Asp182. Chloride is bound at residue Arg210. Catalysis depends on Asp212, which acts as the Nucleophile. His216 serves as a coordination point for Ca(2+). Residue Glu248 is the Proton donor of the active site. The chloride site is built by Asn313 and Arg352. Disulfide bonds link Cys393–Cys399 and Cys465–Cys477.

It belongs to the glycosyl hydrolase 13 family. Monomer. Ca(2+) is required as a cofactor. Chloride serves as cofactor.

The protein localises to the secreted. The enzyme catalyses Endohydrolysis of (1-&gt;4)-alpha-D-glucosidic linkages in polysaccharides containing three or more (1-&gt;4)-alpha-linked D-glucose units.. This Homo sapiens (Human) protein is Alpha-amylase 2B (AMY2B).